A 1159-amino-acid polypeptide reads, in one-letter code: Nucleoporin nup124 (1159 aa).

Over residues 1-13 (MPPVSKNTRTSSK) the composition is skewed to polar residues. 4 disordered regions span residues 1–28 (MPPV…SSRP), 44–77 (FTSG…ELTP), 106–125 (HTNT…TNSP), and 183–273 (TLNI…RRRR). Basic and acidic residues-rich tracts occupy residues 48–62 (LDEK…DRKS) and 106–119 (HTNT…KQKQ). Serine 211 bears the Phosphoserine mark. Residues 226–239 (NEPSAKQNKSFSGN) show a composition bias toward polar residues. Residues 240–260 (DSHKSLTDIRDKENGETEVSA) are compositionally biased toward basic and acidic residues. Basic residues predominate over residues 263 to 273 (HVPHRSSRRRR). Serine 380 carries the post-translational modification Phosphoserine. Residues 426 to 441 (DNKTFEHQPLSKDTEA) are compositionally biased toward basic and acidic residues. Disordered stretches follow at residues 426-715 (DNKT…NTEN), 746-780 (EEAV…AVPS), and 794-1159 (EKTN…RRKR). Residues 442–453 (PKSQFSSSPTKE) are compositionally biased toward polar residues. Phosphoserine is present on serine 465. The segment covering 480-494 (FKFEPKTEATTDKKL) has biased composition (basic and acidic residues). A compositionally biased stretch (polar residues) spans 528–549 (PSKTQETPSITENKPSFFSQLS). Serine 546 bears the Phosphoserine mark. Residues 550 to 560 (PKREETEKKDN) show a composition bias toward basic and acidic residues. The span at 590–626 (PTFNFSLNNASSTQDTTKPTLQFNFGSSFGKPTSNIF) shows a compositional bias: polar residues. The span at 642–656 (ASESKPSAPESKPSS) shows a compositional bias: low complexity. 2 stretches are compositionally biased toward polar residues: residues 657–672 (GFGN…FNLT) and 696–715 (DSLS…NTEN). A compositionally biased stretch (basic and acidic residues) spans 746–758 (EEAVKQKETEKEV). Composition is skewed to polar residues over residues 771-780 (SVSSNNAVPS) and 798-814 (ENNI…NATK). Positions 815–824 (RTLEQTEDAK) are enriched in basic and acidic residues. The span at 830–861 (FGSTTEQANKKASTSNETTKPQLDTSSKTDGV) shows a compositional bias: polar residues. The segment covering 863-879 (ANAPFSFASAFNAPKPS) has biased composition (low complexity). The segment covering 880 to 908 (TNTADGKDSASNLTTPSPAFSFGNNSGVK) has biased composition (polar residues). Over residues 909-926 (ASSNNNPSTNSSTAPFSF) the composition is skewed to low complexity. Over residues 927–947 (GTSNKPAFSFGSATSKTTSEG) the composition is skewed to polar residues. Positions 948–963 (TAPAASASAPAPTTSA) are enriched in low complexity. 5 stretches are compositionally biased toward polar residues: residues 1001 to 1019 (GANN…TPAP), 1042 to 1064 (ITNT…NAGS), 1074 to 1087 (NTPN…NASQ), 1095 to 1108 (EPSN…STGF), and 1116 to 1144 (SAFN…QTNA).

The protein to yeast nucleoporins NUP1 and NUP2.

It localises to the nucleus. The protein localises to the nuclear pore complex. Its function is as follows. Nucleoporins may be involved in both binding and translocation of the proteins during nucleocytoplasmic transport. In S.pombe it is required for the nuclear localization of retrotransposon tf1. This chain is Nucleoporin nup124 (nup124), found in Schizosaccharomyces pombe (strain 972 / ATCC 24843) (Fission yeast).